Consider the following 225-residue polypeptide: Orotate phosphoribosyltransferase (225 aa).

5-phospho-alpha-D-ribose 1-diphosphate is bound by residues Arg107, Lys108, Lys111, and 133 to 141 (EDLTTDGGS). Thr137 contributes to the orotate binding site.

Belongs to the purine/pyrimidine phosphoribosyltransferase family. PyrE subfamily. Homodimer. It depends on Mg(2+) as a cofactor.

The catalysed reaction is orotidine 5'-phosphate + diphosphate = orotate + 5-phospho-alpha-D-ribose 1-diphosphate. It participates in pyrimidine metabolism; UMP biosynthesis via de novo pathway; UMP from orotate: step 1/2. In terms of biological role, catalyzes the transfer of a ribosyl phosphate group from 5-phosphoribose 1-diphosphate to orotate, leading to the formation of orotidine monophosphate (OMP). The chain is Orotate phosphoribosyltransferase from Roseobacter denitrificans (strain ATCC 33942 / OCh 114) (Erythrobacter sp. (strain OCh 114)).